Reading from the N-terminus, the 3391-residue chain is MNNQRKKTARPSFNMLKRARNRVSTGSQLAKRFSKGLLSGQGPMKLVMAFIAFLRFLAIPPTAGILARWGSFKKNGAIKVLRGFKKEISNMLNIMNRRKRSVTMLLMLLPTALAFHLTTRGGEPHMIVSKQEREKSLLFKTSVGVNMCTLIAMDLGELCEDTMTYKCPRITEAEPDDVDCWCNATDTWVTYGTCSQTGEHRRDKRSVALAPHVGLGLETRTETWMSSEGAWKQIQRVETWALRHPGFTVIALFLAHAIGTSITQKGIIFILLMLVTPSMAMRCVGIGSRDFVEGLSGATWVDVVLEHGSCVTTMAKDKPTLDIELLKTEVTNPAVLRKLCIEAKISNTTTDSRCPTQGEATLVEEQDANFVCRRTFVDRGWGNGCGLFGKGSLLTCAKFKCVTKLEGKIVQYENLKYSVIVTVHTGDQHQVGNETTEHGTIATITPQAPTSEIQLTDYGALTLDCSPRTGLDFNEMVLLTMKEKSWLVHKQWFLDLPLPWTSGASTSQETWNRQDLLVTFKTAHAKKQEVVVLGSQEGAMHTALTGATEIQTSGTTTIFAGHLKCRLKMDKLTLKGMSYVMCTGSFKLEKEVAETQHGTVLVQVKYEGTDAPCKIPFSTQDEKGVTQNRLITANPIVTDKEKPVNIETEPPFGESYIVVGAGEKALKQCWFKKGSSIGKMFEATARGARRMAILGDTAWDFGSIGGVFTSVGKLVHQVFGTAYGVLFSGVSWTMKIGIGILLTWLGLNSRSTSLSMTCIAVGMVTLYLGVMVQADSGCVINWKGRELKCGSGIFVTNEVHTWTEQYKFQADSPKRLSAAIGKAWEEGVCGIRSATRLENIMWKQISNELNHILLENDMKFTVVVGDVVGILAQGKKMIRPQPMEHKYSWKSWGKAKIIGADIQNTTFIIDGPDTPECPDDQRAWNIWEVEDYGFGIFTTNIWLKLRDSYTQMCDHRLMSAAIKDSKAVHADMGYWIESEKNETWKLARASFIEVKTCVWPKSHTLWSNGVLESEMIIPKIYGGPISQHNYRPGYFTQTAGPWHLGKLELDFDLCEGTTVVVDEHCGNRGPSLRTTTVTGKIIHEWCCRSCTLPPLRFKGEDGCWYGMEIRPVKEKEENLVKSMVSAGSGEVDSFSLGLLCISIMIEEVMRSRWSRKMLMTGTLAVFLLLIMGQLTWNDLIRLCIMVGANASDRMGMGTTYLALMATFKMRPMFAVGLLFRRLTSREVLLLTIGLSLVASVELPNSLEELGDGLAMGIMILKLLTDFQSHQLWATLLSLTFVKTTFSLHYAWKTMAMVLSIVSLFPLCLSTTSQKTTWLPVLLGSLGCKPLTMFLIAENKIWGRKSWPLNEGIMAVGIVSILLSSLLKNDVPLAGPLIAGGMLIACYVISGSSADLSLEKAAEVSWEEEAEHSGASHNILVEVQDDGTMKIKDEERDDTLTILLKATLLAVSGVYPLSIPATLFVWYFWQKKKQRSGVLWDTPSPPEVERAVLDDGIYRIMQRGLLGRSQVGVGVFQDGVFHTMWHVTRGAVLMYQGKRLEPSWASVKKDLISYGGGWRFQGSWNTGEEVQVIAVEPGKNPKNVQTAPGTFKTPEGEVGAIALDFKPGTSGSPIVNREGKIVGLYGNGVVTTSGTYVSAIAQAKASQEGPLPEIEDEVFRKRNLTIMDLHPGSGKTRRYLPAIVREAIRRNVRTLILAPTRVVASEMAEALKGMPIRYQTTAVKSEHTGKEIVDLMCHATFTMRLLSPVRVPNYNMIIMDEAHFTDPASIARRGYISTRVGMGEAAAIFMTATPPGSVEAFPQSNAVIQDEERDIPERSWNSGYEWITDFPGKTVWFVPSIKSGNDIANCLRKNGKRVIQLSRKTFDTEYQKTKNNDWDYVVTTDISEMGANFRADRVIDPRRCLKPVILKDGPERVILAGPMPVTVASAAQRRGRIGRNQNKEGDQYVYMGQPLNNDEDHAHWTEAKMLLDNINTPEGIIPALFEPEREKSAAIDGEYRLRGEARKTFVELMRRGDLPVWLSYKVASEGFQYSDRRWCFDGERNNQVLEENMDVEMWTKEGERKKLRPRWLDARTYSDPLALREFKEFAAGRRSVSGDLILEIGKLPQHLTQRAQNALDNLVMLHNSEQGGRAYRHAMEELPDTIETLMLLALIAVLTGGVTLFFLSGKGLGKTSIGLLCVMASSVLLWMASVEPHWIAASIILEFFLMVLLIPEPDRQRTPQDNQLAYVVIGLLFMILTVAANEMGLLETTKKDLGIGHVAAENHHHATMLDVDLRPASAWTLYAVATTVITPMMRHTIENTTANISLTAIANQAAILMGLDKGWPISKMDIGVPLLALGCYSQVNPLTLTAAVLMLVAHYAIIGPGLQAKATREAQKRTAAGIMKNPTVDGIVAIDLDPVVYDAKFEKQLGQIMLLILCTSQILLMRTTWALCESITLATGPLTTLWEGSPGKFWNTTIAVSMANIFRGSYLAGAGLAFSLMKSLGGGRRGTGAKGKHWERNGKDRLNQLSKSEFNTYKRSGIMEVDRSEAKEGLKRGETTKHAVSRGTAKLRWFVERNLVKPEGKVIDLGCGRGGWSYYCAGLKKVTEVKGYTKGGPGHEEPIPMATYGWNLVKLYSGKDVFFTPPEKCDTLLCDIGESSPNPTIEEGRTLRVLKMVEPWLRGNQFCIKILNPYMPSVVETLEQMQRKHGGMLVRNPLSRNSTHEMYWVSCGTGNIVSAVNMTSRMLLNRFTMAHRKPTYERDVDLGAGTRHVAVEPEVANLDIIGQRIENIKHEHKSTWHYDEDNPYKTWAYHGSYEVKPSGSASSMVNGVVKLLTKPWDAIPMVTQIAMTDTTPFGQQRVFKEKVDTRTPKAKRGTAQIMEVTARWLWGFLSRNKKPRICTREEFTRKVRSNAAIGAVFVDENQWNSAKEAVEDERFWDLVHRERELHKQGKCATCVYNMMGKREKKLGEFGKAKGSRAIWYMWLGARFLEFEALGFMNEDHWFSRENSLSGVEGEGLHKLGYILRDISKIPGGNMYADDTAGWDTRITEDDLQNEAKITDIMEPEHALLATSIFKLTYQNKVVRVQRPAKNGTVMDVISRRDQRGSGQVGTYGLNTFTNMEAQLIRQMESEGIFSPSELETPNLAERVLDWLEKYGVERLKRMAISGDDCVVKPIDDRFATALTALNDMGKVRKDIPQWEPSKGWNDWQQVPFCSHHFHQLIMKDGREIVVPCRNQDELVGRARVSQGAGWSLRETACLGKSYAQMWQLMYFHRRDLRLAANAICSAVPVDWVPTSRTTWSIHAHHQWMTTEDMLSVWNRVWIEENPWMEDKTHVSSWEDVPYLGKREDQWCGSLIGLTARATWATNIQVAINQVRRLIGNENYLDYMTSMKRFKNESDPEGALW.

The tract at residues 1–15 is interaction with host EXOC1; that stretch reads MNNQRKKTARPSFNM. The Cytoplasmic portion of the chain corresponds to 1–101; that stretch reads MNNQRKKTAR…LNIMNRRKRS (101 aa). The tract at residues 37–72 is hydrophobic; homodimerization of capsid protein C; sequence LLSGQGPMKLVMAFIAFLRFLAIPPTAGILARWGSF. The propeptide at 101 to 114 is ER anchor for the capsid protein C, removed in mature form by serine protease NS3; sequence SVTMLLMLLPTALA. Residues 102 to 119 form a helical membrane-spanning segment; that stretch reads VTMLLMLLPTALAFHLTT. Over 120–242 the chain is Extracellular; the sequence is RGGEPHMIVS…QIQRVETWAL (123 aa). N183 carries N-linked (GlcNAc...) asparagine; by host glycosylation. Residues 243 to 260 traverse the membrane as a helical segment; that stretch reads RHPGFTVIALFLAHAIGT. A topological domain (cytoplasmic) is located at residue S261. The chain crosses the membrane as a helical span at residues 262-280; the sequence is ITQKGIIFILLMLVTPSMA. Over 281–725 the chain is Extracellular; that stretch reads MRCVGIGSRD…HQVFGTAYGV (445 aa). 4 disulfide bridges follow: C283/C310, C340/C401, C354/C385, and C372/C396. Residue N347 is glycosylated (N-linked (GlcNAc...) asparagine; by host). Residues 378-391 form a fusion peptide region; sequence DRGWGNGCGLFGKG. The N-linked (GlcNAc...) asparagine; by host glycan is linked to N433. 2 cysteine pairs are disulfide-bonded: C465/C565 and C582/C613. The chain crosses the membrane as a helical span at residues 726 to 746; it reads LFSGVSWTMKIGIGILLTWLG. The Cytoplasmic segment spans residues 747 to 752; it reads LNSRST. Residues 753 to 773 traverse the membrane as a helical segment; sequence SLSMTCIAVGMVTLYLGVMVQ. Over 774–1198 the chain is Extracellular; it reads ADSGCVINWK…NASDRMGMGT (425 aa). 6 disulfides stabilise this stretch: C778–C789, C829–C917, C953–C997, C1054–C1103, C1065–C1087, and C1086–C1090. N904 and N981 each carry an N-linked (GlcNAc...) asparagine; by host glycan. An N-linked (GlcNAc...) asparagine; by host glycan is attached at N1189. The chain crosses the membrane as a helical span at residues 1199 to 1219; the sequence is TYLALMATFKMRPMFAVGLLF. Topologically, residues 1220–1225 are cytoplasmic; sequence RRLTSR. A helical membrane pass occupies residues 1226 to 1244; sequence EVLLLTIGLSLVASVELPN. The Lumenal segment spans residues 1245–1268; the sequence is SLEELGDGLAMGIMILKLLTDFQS. Residues 1269 to 1289 form a helical membrane-spanning segment; the sequence is HQLWATLLSLTFVKTTFSLHY. A1290 is a topological domain (cytoplasmic). A helical membrane pass occupies residues 1291–1309; the sequence is WKTMAMVLSIVSLFPLCLS. Over 1310-1314 the chain is Lumenal; the sequence is TTSQK. A helical transmembrane segment spans residues 1315–1335; it reads TTWLPVLLGSLGCKPLTMFLI. Residues 1336–1345 lie on the Cytoplasmic side of the membrane; the sequence is AENKIWGRKS. A helical membrane pass occupies residues 1346–1366; the sequence is WPLNEGIMAVGIVSILLSSLL. At 1367 to 1369 the chain is on the lumenal side; that stretch reads KND. The helical transmembrane segment at 1370 to 1390 threads the bilayer; it reads VPLAGPLIAGGMLIACYVISG. The Cytoplasmic segment spans residues 1391–1446; that stretch reads SSADLSLEKAAEVSWEEEAEHSGASHNILVEVQDDGTMKIKDEERDDTLTILLKAT. Residues 1397-1436 are interacts with and activates NS3 protease; it reads LEKAAEVSWEEEAEHSGASHNILVEVQDDGTMKIKDEERD. The segment at residues 1447 to 1467 is an intramembrane region (helical); the sequence is LLAVSGVYPLSIPATLFVWYF. At 1468–2147 the chain is on the cytoplasmic side; sequence WQKKKQRSGV…MEELPDTIET (680 aa). One can recognise a Peptidase S7 domain in the interval 1475 to 1652; it reads SGVLWDTPSP…KASQEGPLPE (178 aa). Catalysis depends on charge relay system; for serine protease NS3 activity residues H1525, D1549, and S1609. The region spanning 1655-1811 is the Helicase ATP-binding domain; the sequence is DEVFRKRNLT…QSNAVIQDEE (157 aa). Positions 1659–1662 are important for RNA-binding; the sequence is RKRN. Residue 1668-1675 participates in ATP binding; that stretch reads LHPGSGKT. A DEAH box motif is present at residues 1759–1762; the sequence is DEAH. The 168-residue stretch at 1821–1988 folds into the Helicase C-terminal domain; the sequence is SGYEWITDFP…IIPALFEPER (168 aa). K1863 is subject to N6-acetyllysine; by host. A helical membrane pass occupies residues 2148–2168; that stretch reads LMLLALIAVLTGGVTLFFLSG. Topologically, residues 2169 to 2170 are lumenal; sequence KG. The helical intramembrane region spans 2171 to 2191; the sequence is LGKTSIGLLCVMASSVLLWMA. S2192 is a topological domain (lumenal). Residues 2193–2213 traverse the membrane as a helical segment; it reads VEPHWIAASIILEFFLMVLLI. The Cytoplasmic portion of the chain corresponds to 2214–2228; it reads PEPDRQRTPQDNQLA. A helical membrane pass occupies residues 2229–2249; it reads YVVIGLLFMILTVAANEMGLL. The Lumenal segment spans residues 2250–2275; it reads ETTKKDLGIGHVAAENHHHATMLDVD. The segment at residues 2276 to 2296 is an intramembrane region (helical); that stretch reads LRPASAWTLYAVATTVITPMM. The Lumenal portion of the chain corresponds to 2297–2348; the sequence is RHTIENTTANISLTAIANQAAILMGLDKGWPISKMDIGVPLLALGCYSQVNP. N2302 and N2306 each carry an N-linked (GlcNAc...) asparagine; by host glycan. Residues 2349 to 2369 form a helical membrane-spanning segment; sequence LTLTAAVLMLVAHYAIIGPGL. The Cytoplasmic portion of the chain corresponds to 2370–2414; sequence QAKATREAQKRTAAGIMKNPTVDGIVAIDLDPVVYDAKFEKQLGQ. Residues 2415–2435 form a helical membrane-spanning segment; sequence IMLLILCTSQILLMRTTWALC. Topologically, residues 2436 to 2460 are lumenal; it reads ESITLATGPLTTLWEGSPGKFWNTT. N2458 carries N-linked (GlcNAc...) asparagine; by host glycosylation. Residues 2461-2481 form a helical membrane-spanning segment; that stretch reads IAVSMANIFRGSYLAGAGLAF. At 2482 to 3391 the chain is on the cytoplasmic side; sequence SLMKSLGGGR…NESDPEGALW (910 aa). The region spanning 2494–2755 is the mRNA cap 0-1 NS5-type MT domain; sequence TGAKGKHWER…DVDLGAGTRH (262 aa). Residue S2548 coordinates S-adenosyl-L-methionine. The residue at position 2548 (S2548) is a Phosphoserine. The For 2'-O-MTase activity role is filled by K2553. The SUMO-interacting motif motif lies at 2569–2572; sequence VIDL. S-adenosyl-L-methionine contacts are provided by G2578, W2579, T2596, K2597, D2623, and V2624. Catalysis depends on D2638, which acts as the For 2'-O-MTase activity. I2639 lines the S-adenosyl-L-methionine pocket. Active-site for 2'-O-MTase activity residues include K2672 and E2708. Y2710 is an S-adenosyl-L-methionine binding site. 4 residues coordinate Zn(2+): E2929, H2933, C2938, and C2941. In terms of domain architecture, RdRp catalytic spans 3019–3168; sequence GNMYADDTAG…KPIDDRFATA (150 aa). The Zn(2+) site is built by H3203, C3219, and C3338.

In the N-terminal section; belongs to the class I-like SAM-binding methyltransferase superfamily. mRNA cap 0-1 NS5-type methyltransferase family. In terms of assembly, homodimer. Interacts (via N-terminus) with host EXOC1 (via C-terminus); this interaction results in EXOC1 degradation through the proteasome degradation pathway. Forms heterodimers with envelope protein E in the endoplasmic reticulum and Golgi. As to quaternary structure, homodimer; in the endoplasmic reticulum and Golgi. Interacts with protein prM. Interacts with non-structural protein 1. In terms of assembly, homodimer; Homohexamer when secreted. Interacts with envelope protein E. Interacts (via N-terminus) with serine protease NS3. As to quaternary structure, forms a heterodimer with serine protease NS3. May form homooligomers. In terms of assembly, forms a heterodimer with NS2B. Interacts with NS4B. Interacts with unphosphorylated RNA-directed RNA polymerase NS5; this interaction stimulates RNA-directed RNA polymerase NS5 guanylyltransferase activity. Interacts with host SHFL. Interacts with host MAVS; this interaction inhibits the synthesis of IFN-beta. Interacts with host SHFL. Interacts with host AUP1; the interaction occurs in the presence of Dengue virus NS4B and induces lipophagy which facilitates production of virus progeny particles. As to quaternary structure, interacts with serine protease NS3. In terms of assembly, homodimer. Interacts with host STAT2; this interaction inhibits the phosphorylation of the latter, and, when all viral proteins are present (polyprotein), targets STAT2 for degradation. Interacts with serine protease NS3. In terms of processing, specific enzymatic cleavages in vivo yield mature proteins. Cleavages in the lumen of endoplasmic reticulum are performed by host signal peptidase, whereas cleavages in the cytoplasmic side are performed by serine protease NS3. Signal cleavage at the 2K-4B site requires a prior NS3 protease-mediated cleavage at the 4A-2K site. Cleaved in post-Golgi vesicles by a host furin, releasing the mature small envelope protein M, and peptide pr. This cleavage is incomplete as up to 30% of viral particles still carry uncleaved prM. Post-translationally, N-glycosylated. In terms of processing, N-glycosylated. The excreted form is glycosylated and this is required for efficient secretion of the protein from infected cells. Acetylated by host KAT5. Acetylation modulates NS3 RNA-binding and unwinding activities and plays an important positive role for viral replication. Post-translationally, sumoylation of RNA-directed RNA polymerase NS5 increases NS5 protein stability allowing proper viral RNA replication. In terms of processing, phosphorylated on serines residues. This phosphorylation may trigger NS5 nuclear localization.

Its subcellular location is the virion. The protein resides in the host nucleus. It localises to the host cytoplasm. It is found in the host perinuclear region. The protein localises to the secreted. Its subcellular location is the virion membrane. The protein resides in the host endoplasmic reticulum membrane. It localises to the host mitochondrion. The catalysed reaction is Selective hydrolysis of -Xaa-Xaa-|-Yaa- bonds in which each of the Xaa can be either Arg or Lys and Yaa can be either Ser or Ala.. It carries out the reaction RNA(n) + a ribonucleoside 5'-triphosphate = RNA(n+1) + diphosphate. The enzyme catalyses a ribonucleoside 5'-triphosphate + H2O = a ribonucleoside 5'-diphosphate + phosphate + H(+). It catalyses the reaction ATP + H2O = ADP + phosphate + H(+). The catalysed reaction is a 5'-end (5'-triphosphoguanosine)-ribonucleoside in mRNA + S-adenosyl-L-methionine = a 5'-end (N(7)-methyl 5'-triphosphoguanosine)-ribonucleoside in mRNA + S-adenosyl-L-homocysteine. It carries out the reaction a 5'-end (N(7)-methyl 5'-triphosphoguanosine)-ribonucleoside in mRNA + S-adenosyl-L-methionine = a 5'-end (N(7)-methyl 5'-triphosphoguanosine)-(2'-O-methyl-ribonucleoside) in mRNA + S-adenosyl-L-homocysteine + H(+). Its function is as follows. Plays a role in virus budding by binding to the cell membrane and gathering the viral RNA into a nucleocapsid that forms the core of a mature virus particle. During virus entry, may induce genome penetration into the host cytoplasm after hemifusion induced by the surface proteins. Can migrate to the cell nucleus where it modulates host functions. Overcomes the anti-viral effects of host EXOC1 by sequestering and degrading the latter through the proteasome degradation pathway. In terms of biological role, inhibits RNA silencing by interfering with host Dicer. Functionally, prevents premature fusion activity of envelope proteins in trans-Golgi by binding to envelope protein E at pH6.0. After virion release in extracellular space, gets dissociated from E dimers. Acts as a chaperone for envelope protein E during intracellular virion assembly by masking and inactivating envelope protein E fusion peptide. prM is the only viral peptide matured by host furin in the trans-Golgi network probably to avoid catastrophic activation of the viral fusion activity in acidic Golgi compartment prior to virion release. prM-E cleavage is inefficient, and many virions are only partially matured. These uncleaved prM would play a role in immune evasion. Its function is as follows. May play a role in virus budding. Exerts cytotoxic effects by activating a mitochondrial apoptotic pathway through M ectodomain. May display a viroporin activity. In terms of biological role, binds to host cell surface receptor and mediates fusion between viral and cellular membranes. Envelope protein is synthesized in the endoplasmic reticulum in the form of heterodimer with protein prM. They play a role in virion budding in the ER, and the newly formed immature particle is covered with 60 spikes composed of heterodimer between precursor prM and envelope protein E. The virion is transported to the Golgi apparatus where the low pH causes dissociation of PrM-E heterodimers and formation of E homodimers. prM-E cleavage is inefficient, and many virions are only partially matured. These uncleaved prM would play a role in immune evasion. Functionally, involved in immune evasion, pathogenesis and viral replication. Once cleaved off the polyprotein, is targeted to three destinations: the viral replication cycle, the plasma membrane and the extracellular compartment. Essential for viral replication. Required for formation of the replication complex and recruitment of other non-structural proteins to the ER-derived membrane structures. Excreted as a hexameric lipoparticle that plays a role against host immune response. Antagonizing the complement function. Binds to the host macrophages and dendritic cells. Inhibits signal transduction originating from Toll-like receptor 3 (TLR3). Disrupts the host endothelial glycocalyx layer of host pulmonary microvascular endothelial cells, inducing degradation of sialic acid and shedding of heparan sulfate proteoglycans. NS1 induces expression of sialidases, heparanase, and activates cathepsin L, which activates heparanase via enzymatic cleavage. These effects are probably linked to the endothelial hyperpermeability observed in severe dengue disease. Its function is as follows. Component of the viral RNA replication complex that functions in virion assembly and antagonizes the host immune response. In terms of biological role, required cofactor for the serine protease function of NS3. May have membrane-destabilizing activity and form viroporins. Functionally, displays three enzymatic activities: serine protease, NTPase and RNA c. NS3 serine protease, in association with NS2B, performs its autocleavage and cleaves the polyprotein at dibasic sites in the cytoplasm: C-prM, NS2A-NS2B, NS2B-NS3, NS3-NS4A, NS4A-2K and NS4B-NS5. NS3 RNA helicase binds RNA and unwinds dsRNA in the 3' to 5' direction. Regulates the ATPase activity of the NS3 helicase activity. NS4A allows NS3 helicase to conserve energy during unwinding. Plays a role in the inhibition of the host innate immune response. Interacts with host MAVS and thereby prevents the interaction between RIGI and MAVS. In turn, IFN-beta production is impaired. Interacts with host AUP1 which mediates induction of lipophagy in host cells and facilitates production of virus progeny particles. Its function is as follows. Functions as a signal peptide for NS4B and is required for the interferon antagonism activity of the latter. In terms of biological role, induces the formation of ER-derived membrane vesicles where the viral replication takes place. Inhibits interferon (IFN)-induced host STAT1 phosphorylation and nuclear translocation, thereby preventing the establishment of cellular antiviral state by blocking the IFN-alpha/beta pathway. Functionally, replicates the viral (+) and (-) RNA genome, and performs the capping of genomes in the cytoplasm. NS5 methylates viral RNA cap at guanine N-7 and ribose 2'-O positions. Besides its role in RNA genome replication, also prevents the establishment of cellular antiviral state by blocking the interferon-alpha/beta (IFN-alpha/beta) signaling pathway. Inhibits host TYK2 and STAT2 phosphorylation, thereby preventing activation of JAK-STAT signaling pathway. This chain is Genome polyprotein, found in Aedes aegypti (Yellowfever mosquito).